The chain runs to 1434 residues: DNA-directed RNA polymerase subunit beta' (1434 aa).

Zn(2+) is bound by residues C70, C72, C85, and C88. Mg(2+) is bound by residues D460, D462, and D464. Residues C840, C914, C921, and C924 each coordinate Zn(2+).

This sequence belongs to the RNA polymerase beta' chain family. As to quaternary structure, the RNAP catalytic core consists of 2 alpha, 1 beta, 1 beta' and 1 omega subunit. When a sigma factor is associated with the core the holoenzyme is formed, which can initiate transcription. Mg(2+) serves as cofactor. The cofactor is Zn(2+).

It carries out the reaction RNA(n) + a ribonucleoside 5'-triphosphate = RNA(n+1) + diphosphate. Functionally, DNA-dependent RNA polymerase catalyzes the transcription of DNA into RNA using the four ribonucleoside triphosphates as substrates. This chain is DNA-directed RNA polymerase subunit beta', found in Tolumonas auensis (strain DSM 9187 / NBRC 110442 / TA 4).